Consider the following 680-residue polypeptide: Outer dense fiber protein 2 (680 aa).

A disordered region spans residues 27-46; sequence LPKPSATSSQKSHKRGMKGD. A phosphoserine mark is found at S68 and S69. The residue at position 87 (T87) is a Phosphothreonine. S90 is modified (phosphoserine; by TSSK4). Phosphoserine is present on residues S101 and S104. T105 carries the post-translational modification Phosphothreonine. S110 and S124 each carry phosphoserine. Residue K133 forms a Glycyl lysine isopeptide (Lys-Gly) (interchain with G-Cter in SUMO2) linkage. Position 134 is a phosphoserine (S134). Residues 139–212 adopt a coiled-coil conformation; it reads QKGERQMAKR…MSKLVEAEMD (74 aa). The residue at position 226 (T226) is a Phosphothreonine. A Phosphoserine modification is found at S256. 2 coiled-coil regions span residues 275 to 418 and 456 to 630; these read KEDS…AEQL and EIIV…SDLR. The interval 387 to 410 is disordered; sequence KQKGDRDKESLKKAIRAQKERAEK. Position 627 is a phosphoserine (S627). The segment at 632-680 is disordered; it reads RETGGDQCPEYRVPTGDCQEGGGNPPVPAAARGENTGMWDPGKAVGERH.

It belongs to the ODF2 family. In terms of assembly, self-associates. Associates with microtubules and forms a fibrillar structure partially linked to the microtubule network. Interacts via its C-terminus with PLK1. Interacts with ODF1. Interacts with MARK4; the interaction is required for localization of ODF2 to centrioles. Interacts with TSSK4. Interacts with AKNA. Interacts with QRICH2. Interacts with CFAP58. Interacts with BBOF1. Interacts with CCDC38. Interacts with CCDC42. Post-translationally, tyrosine phosphorylated. Phosphorylated on Ser-90 by TSSK4.

Its subcellular location is the cytoplasm. It localises to the cytoskeleton. The protein localises to the microtubule organizing center. The protein resides in the centrosome. It is found in the cell projection. Its subcellular location is the cilium. It localises to the centriole. The protein localises to the spindle pole. The protein resides in the flagellum. Seems to be a major component of sperm tail outer dense fibers (ODF). ODFs are filamentous structures located on the outside of the axoneme in the midpiece and principal piece of the mammalian sperm tail and may help to maintain the passive elastic structures and elastic recoil of the sperm tail. May have a modulating influence on sperm motility. Functions as a general scaffold protein that is specifically localized at the distal/subdistal appendages of mother centrioles. Component of the centrosome matrix required for the localization of PLK1 and NIN to the centrosomes. Required for the formation and/or maintenance of normal CETN1 assembly. This chain is Outer dense fiber protein 2 (ODF2), found in Pongo abelii (Sumatran orangutan).